A 328-amino-acid chain; its full sequence is Tetraacyldisaccharide 4'-kinase (328 aa).

55–62 (TVGGNGKT) is a binding site for ATP.

This sequence belongs to the LpxK family.

It carries out the reaction a lipid A disaccharide + ATP = a lipid IVA + ADP + H(+). The protein operates within glycolipid biosynthesis; lipid IV(A) biosynthesis; lipid IV(A) from (3R)-3-hydroxytetradecanoyl-[acyl-carrier-protein] and UDP-N-acetyl-alpha-D-glucosamine: step 6/6. Functionally, transfers the gamma-phosphate of ATP to the 4'-position of a tetraacyldisaccharide 1-phosphate intermediate (termed DS-1-P) to form tetraacyldisaccharide 1,4'-bis-phosphate (lipid IVA). This Hamiltonella defensa subsp. Acyrthosiphon pisum (strain 5AT) protein is Tetraacyldisaccharide 4'-kinase.